Reading from the N-terminus, the 131-residue chain is Small ribosomal subunit protein uS11 (131 aa).

It belongs to the universal ribosomal protein uS11 family. In terms of assembly, part of the 30S ribosomal subunit. Interacts with proteins S7 and S18. Binds to IF-3.

Its function is as follows. Located on the platform of the 30S subunit, it bridges several disparate RNA helices of the 16S rRNA. Forms part of the Shine-Dalgarno cleft in the 70S ribosome. The polypeptide is Small ribosomal subunit protein uS11 (Paramagnetospirillum magneticum (strain ATCC 700264 / AMB-1) (Magnetospirillum magneticum)).